The sequence spans 1159 residues: DNA-directed RNA polymerase subunit beta (1159 aa).

This sequence belongs to the RNA polymerase beta chain family. The RNAP catalytic core consists of 2 alpha, 1 beta, 1 beta' and 1 omega subunit. When a sigma factor is associated with the core the holoenzyme is formed, which can initiate transcription.

The catalysed reaction is RNA(n) + a ribonucleoside 5'-triphosphate = RNA(n+1) + diphosphate. DNA-dependent RNA polymerase catalyzes the transcription of DNA into RNA using the four ribonucleoside triphosphates as substrates. The chain is DNA-directed RNA polymerase subunit beta from Deinococcus radiodurans (strain ATCC 13939 / DSM 20539 / JCM 16871 / CCUG 27074 / LMG 4051 / NBRC 15346 / NCIMB 9279 / VKM B-1422 / R1).